A 320-amino-acid polypeptide reads, in one-letter code: Tetraspanin-32 (320 aa).

Transmembrane regions (helical) follow at residues 14–34 (MLVTCFFILLLGLSVATMVTL), 60–80 (WAFSAGLSLVGLLTLGAVLSA), 90–110 (LMAGGFLCFSLAFCAQVQVVF), and 203–223 (SIGLALTVSALLFSSFLWFAI).

The protein belongs to the tetraspanin (TM4SF) family. In terms of tissue distribution, expressed ubiquitously at low levels. High levels of expression are confined to hematopoietic tissues including peripheral blood leukocytes, thymus and spleen.

It localises to the membrane. In Homo sapiens (Human), this protein is Tetraspanin-32 (TSPAN32).